Here is a 194-residue protein sequence, read N- to C-terminus: MQGFFWKTWLVLAVCGTPASLAHRPLSYGEALELAVSVYNGKAGEASLYRLLEAVPQPEWDPSSEGSQQLNFTLKETACQVEEERSLEECGFQEDGVVLECTGYYFFGETPPVVVLSCVPVGGVEEEEEEEEEEQKAEAENDEEVEKEKGDEEKDQPKRVKRFKKFFKKVKKSVKKRLKKIFKKPMVIGVTIPF.

The first 22 residues, 1–22 (MQGFFWKTWLVLAVCGTPASLA), serve as a signal peptide directing secretion. The propeptide occupies 23 to 164 (HRPLSYGEAL…DQPKRVKRFK (142 aa)). Intrachain disulfides connect Cys-79-Cys-90 and Cys-101-Cys-118. Positions 125-145 (EEEEEEEEEEQKAEAENDEEV) are enriched in acidic residues. Residues 125-156 (EEEEEEEEEEQKAEAENDEEVEKEKGDEEKDQ) are disordered. The span at 146-156 (EKEKGDEEKDQ) shows a compositional bias: basic and acidic residues.

The protein belongs to the cathelicidin family. In terms of tissue distribution, expressed by the venom gland.

The protein resides in the secreted. Its subcellular location is the target cell membrane. In terms of biological role, potent antimicrobial peptide against Gram-negative and Gram-positive bacteria. Adopts an amphipathic alpha helical conformation, that may allow to partition into the target membrane. Low hemolytic activities have been observed on mammalian cells. In Crotalus durissus cascavella (Northeastern Brazilian rattlesnake), this protein is Cathelicidin-related peptide isoform 3.